Reading from the N-terminus, the 334-residue chain is D-fructose 1,6-bisphosphatase class 2/sedoheptulose 1,7-bisphosphatase (334 aa).

4 residues coordinate Mn(2+): Asp-33, Glu-57, Asp-85, and Glu-88. Residues 88–90 (EGT), Tyr-119, 164–166 (RAR), and 186–188 (DGD) contribute to the substrate site. Glu-213 contributes to the Mn(2+) binding site.

The protein belongs to the FBPase class 2 family. In terms of assembly, homotetramer. It depends on Mn(2+) as a cofactor.

The enzyme catalyses beta-D-fructose 1,6-bisphosphate + H2O = beta-D-fructose 6-phosphate + phosphate. It carries out the reaction D-sedoheptulose 1,7-bisphosphate + H2O = D-sedoheptulose 7-phosphate + phosphate. It participates in carbohydrate biosynthesis; Calvin cycle. Catalyzes the hydrolysis of fructose 1,6-bisphosphate (Fru 1,6-P2) and sedoheptulose 1,7-bisphosphate (Sed 1,7-P2) to fructose 6-phosphate and sedoheptulose 7-phosphate, respectively. The polypeptide is D-fructose 1,6-bisphosphatase class 2/sedoheptulose 1,7-bisphosphatase (Prochlorococcus marinus (strain MIT 9313)).